The following is a 261-amino-acid chain: Thiazole synthase (261 aa).

Catalysis depends on Lys95, which acts as the Schiff-base intermediate with DXP. 1-deoxy-D-xylulose 5-phosphate contacts are provided by residues Gly156, 182–183 (AG), and 204–205 (NT).

This sequence belongs to the ThiG family. Homotetramer. Forms heterodimers with either ThiH or ThiS.

Its subcellular location is the cytoplasm. The catalysed reaction is [ThiS sulfur-carrier protein]-C-terminal-Gly-aminoethanethioate + 2-iminoacetate + 1-deoxy-D-xylulose 5-phosphate = [ThiS sulfur-carrier protein]-C-terminal Gly-Gly + 2-[(2R,5Z)-2-carboxy-4-methylthiazol-5(2H)-ylidene]ethyl phosphate + 2 H2O + H(+). It functions in the pathway cofactor biosynthesis; thiamine diphosphate biosynthesis. In terms of biological role, catalyzes the rearrangement of 1-deoxy-D-xylulose 5-phosphate (DXP) to produce the thiazole phosphate moiety of thiamine. Sulfur is provided by the thiocarboxylate moiety of the carrier protein ThiS. In vitro, sulfur can be provided by H(2)S. This is Thiazole synthase from Pectobacterium atrosepticum (strain SCRI 1043 / ATCC BAA-672) (Erwinia carotovora subsp. atroseptica).